Reading from the N-terminus, the 693-residue chain is Elongation factor G (693 aa).

The region spanning 8 to 282 (EKTRNIGIMA…AVIDYLPSPL (275 aa)) is the tr-type G domain. GTP-binding positions include 17–24 (AHVDAGKT), 81–85 (DTPGH), and 135–138 (NKMD).

This sequence belongs to the TRAFAC class translation factor GTPase superfamily. Classic translation factor GTPase family. EF-G/EF-2 subfamily.

Its subcellular location is the cytoplasm. In terms of biological role, catalyzes the GTP-dependent ribosomal translocation step during translation elongation. During this step, the ribosome changes from the pre-translocational (PRE) to the post-translocational (POST) state as the newly formed A-site-bound peptidyl-tRNA and P-site-bound deacylated tRNA move to the P and E sites, respectively. Catalyzes the coordinated movement of the two tRNA molecules, the mRNA and conformational changes in the ribosome. The sequence is that of Elongation factor G from Streptococcus gordonii (strain Challis / ATCC 35105 / BCRC 15272 / CH1 / DL1 / V288).